A 395-amino-acid chain; its full sequence is Formate-dependent phosphoribosylglycinamide formyltransferase (395 aa).

Residues 22–23 (EL) and E82 each bind N(1)-(5-phospho-beta-D-ribosyl)glycinamide. Residues R115, K156, 161–166 (SSGKGQ), 196–199 (EGFI), and E204 each bind ATP. One can recognise an ATP-grasp domain in the interval 120-309 (RLAAETLGLP…EFALHARAIL (190 aa)). 2 residues coordinate Mg(2+): E268 and E280. Residues D287, K356, and 363 to 364 (RR) each bind N(1)-(5-phospho-beta-D-ribosyl)glycinamide.

It belongs to the PurK/PurT family. In terms of assembly, homodimer.

It catalyses the reaction N(1)-(5-phospho-beta-D-ribosyl)glycinamide + formate + ATP = N(2)-formyl-N(1)-(5-phospho-beta-D-ribosyl)glycinamide + ADP + phosphate + H(+). The protein operates within purine metabolism; IMP biosynthesis via de novo pathway; N(2)-formyl-N(1)-(5-phospho-D-ribosyl)glycinamide from N(1)-(5-phospho-D-ribosyl)glycinamide (formate route): step 1/1. Its function is as follows. Involved in the de novo purine biosynthesis. Catalyzes the transfer of formate to 5-phospho-ribosyl-glycinamide (GAR), producing 5-phospho-ribosyl-N-formylglycinamide (FGAR). Formate is provided by PurU via hydrolysis of 10-formyl-tetrahydrofolate. This is Formate-dependent phosphoribosylglycinamide formyltransferase from Stenotrophomonas maltophilia (strain K279a).